The primary structure comprises 1029 residues: Sodium/potassium-transporting ATPase subunit alpha-4 (1029 aa).

Residues 1–37 (MGLWGKKGTVAPHDQSPRRRPKKGLIKKKMVKREKQK) are disordered. At 1-95 (MGLWGKKGTV…NTVTPPPTTP (95 aa)) the chain is on the cytoplasmic side. Positions 18–36 (RRRPKKGLIKKKMVKREKQ) are enriched in basic residues. The tract at residues 90–92 (PPP) is interaction with phosphoinositide-3 kinase. The chain crosses the membrane as a helical span at residues 96 to 116 (EWVKFCKQLFGGFSLLLWTGA). Residues 117–139 (ILCFVAYSIQIYFNEEPTKDNLY) are Extracellular-facing. The helical transmembrane segment at 140–160 (LSIVLSVVVIVTGCFSYYQEA) threads the bilayer. The Cytoplasmic portion of the chain corresponds to 161 to 296 (KSSKIMESFK…VGQTPIAAEI (136 aa)). A compositionally biased stretch (polar residues) spans 223–237 (NSSLTGESEPQSRSP). Residues 223 to 242 (NSSLTGESEPQSRSPDFTHE) are disordered. The chain crosses the membrane as a helical span at residues 297-316 (EHFIHLITVVAVFLGVTFFA). The Extracellular portion of the chain corresponds to 317–328 (LSLLLGYGWLEA). The helical transmembrane segment at 329–346 (IIFLIGIIVANVPEGLLA) threads the bilayer. The Cytoplasmic portion of the chain corresponds to 347–778 (TVTVCLTLTA…EEGRLIFDNL (432 aa)). Asp-384 serves as the catalytic 4-aspartylphosphate intermediate. Residues Asp-723 and Asp-727 each contribute to the Mg(2+) site. Residues 779–798 (KKSIMYTLTSNIPEITPFLM) traverse the membrane as a helical segment. The Extracellular segment spans residues 799 to 808 (FIILGIPLPL). The helical transmembrane segment at 809–829 (GTITILCIDLGTDMVPAISLA) threads the bilayer. Residues 830-849 (YESAESDIMKRLPRNPKTDN) lie on the Cytoplasmic side of the membrane. A helical transmembrane segment spans residues 850 to 872 (LVNHRLIGMAYGQIGMIQALAGF). Topologically, residues 873 to 924 (FTYFVILAENGFRPVDLLGIRLHWEDKYLNDLEDSYGQQWTYEQRKVVEFTC) are extracellular. A helical membrane pass occupies residues 925–944 (QTAFFVTIVVVQWADLIISK). Topologically, residues 945–957 (TRRNSLFQQGMRN) are cytoplasmic. At Ser-949 the chain carries Phosphoserine; by PKA. A helical transmembrane segment spans residues 958 to 976 (KVLIFGILEETLLAAFLSY). The Extracellular portion of the chain corresponds to 977-991 (TPGMDVALRMYPLKI). Residues 992–1012 (TWWLCAIPYSILIFVYDEIRK) form a helical membrane-spanning segment. Residues 1013–1029 (LLIRQHPDGWVERETYY) are Cytoplasmic-facing.

It belongs to the cation transport ATPase (P-type) (TC 3.A.3) family. Type IIC subfamily. The sodium/potassium-transporting ATPase is composed of a catalytic alpha subunit, an auxiliary non-catalytic beta subunit and an additional regulatory subunit. In terms of tissue distribution, specifically expressed in testis. Found in very low levels in skeletal muscle. Expressed in mature sperm (at protein level).

Its subcellular location is the cell membrane. It catalyses the reaction K(+)(out) + Na(+)(in) + ATP + H2O = K(+)(in) + Na(+)(out) + ADP + phosphate + H(+). Its activity is regulated as follows. Specifically inhibited by an endogenous cardiac glycoside, ouabain. This is the catalytic component of the active enzyme, which catalyzes the hydrolysis of ATP coupled with the exchange of sodium and potassium ions across the plasma membrane. This action creates the electrochemical gradient of sodium and potassium ions, providing the energy for active transport of various nutrients. Plays a role in sperm motility. This Homo sapiens (Human) protein is Sodium/potassium-transporting ATPase subunit alpha-4.